Here is a 166-residue protein sequence, read N- to C-terminus: Small ribosomal subunit protein uS5 (166 aa).

The S5 DRBM domain maps to 11-74 (LEDRVVAINR…EDAKKNLVEV (64 aa)).

The protein belongs to the universal ribosomal protein uS5 family. In terms of assembly, part of the 30S ribosomal subunit. Contacts proteins S4 and S8.

In terms of biological role, with S4 and S12 plays an important role in translational accuracy. Located at the back of the 30S subunit body where it stabilizes the conformation of the head with respect to the body. This Enterococcus faecalis (strain ATCC 700802 / V583) protein is Small ribosomal subunit protein uS5.